The sequence spans 153 residues: ORM1-like protein 1 (153 aa).

The Cytoplasmic segment spans residues 1–26 (MNVGVAHSEVNPNTRVMNSRGMWLTY). Helical transmembrane passes span 27–46 (ALGVGLLHIVLLSIPFFSVP) and 47–64 (VAWTLTNVIHNLGMYVFL). Residues 65-100 (HAVKGTPFETPDQGKARLLTHWEQLDYGVQFTSSRK) are Cytoplasmic-facing. A helical transmembrane segment spans residues 101-121 (FFTISPIILYFLASFYTKYDT). At 122-123 (TH) the chain is on the extracellular side. A helical transmembrane segment spans residues 124–140 (FILNTASLLSVLIPKMP). At 141-153 (QLHGVRIFGINKY) the chain is on the cytoplasmic side.

It belongs to the ORM family. Ceramide-sensitive subunit of the serine palmitoyltransferase (SPT) complex, which is also composed of SPTLC1, SPTLC2/3 and SPTSSA/B.

Its subcellular location is the endoplasmic reticulum membrane. Plays an essential role in the homeostatic regulation of sphingolipid de novo biosynthesis by modulating the activity of the serine palmitoyltransferase (SPT) in response to ceramide levels. When complexed to SPT, the binding of ceramides to its N-terminus stabilizes a conformation that block SPT substrate entry, hence preventing SPT catalytic activity. Through this mechanism, maintains ceramide levels at sufficient concentrations for the production of complex sphingolipids, but which prevents the accumulation of ceramides to levels that trigger apoptosis. The sequence is that of ORM1-like protein 1 (ORMDL1) from Bos taurus (Bovine).